A 159-amino-acid polypeptide reads, in one-letter code: SsrA-binding protein (159 aa).

The segment at 138–159 (KRDTLKDKDWQRQKERMMKHSV) is disordered.

Belongs to the SmpB family.

It is found in the cytoplasm. Functionally, required for rescue of stalled ribosomes mediated by trans-translation. Binds to transfer-messenger RNA (tmRNA), required for stable association of tmRNA with ribosomes. tmRNA and SmpB together mimic tRNA shape, replacing the anticodon stem-loop with SmpB. tmRNA is encoded by the ssrA gene; the 2 termini fold to resemble tRNA(Ala) and it encodes a 'tag peptide', a short internal open reading frame. During trans-translation Ala-aminoacylated tmRNA acts like a tRNA, entering the A-site of stalled ribosomes, displacing the stalled mRNA. The ribosome then switches to translate the ORF on the tmRNA; the nascent peptide is terminated with the 'tag peptide' encoded by the tmRNA and targeted for degradation. The ribosome is freed to recommence translation, which seems to be the essential function of trans-translation. The protein is SsrA-binding protein of Alteromonas mediterranea (strain DSM 17117 / CIP 110805 / LMG 28347 / Deep ecotype).